The primary structure comprises 136 residues: Protein PsiE (136 aa).

The next 4 helical transmembrane spans lie at 15–35, 55–75, 83–103, and 108–128; these read ILQN…VVFL, YELV…ALIV, HFPL…LIIV, and PMDV…LWLC.

It belongs to the PsiE family.

The protein resides in the cell inner membrane. The sequence is that of Protein PsiE from Salmonella gallinarum (strain 287/91 / NCTC 13346).